The primary structure comprises 822 residues: Fibroblast growth factor receptor 1 (822 aa).

Positions M1–A21 are cleaved as a signal peptide. The Extracellular portion of the chain corresponds to R22–E376. The Ig-like C2-type 1 domain maps to P25–S119. C55 and C101 are joined by a disulfide. N-linked (GlcNAc...) asparagine glycans are attached at residues N77 and N117. A disordered region spans residues D120 to E162. Residues S125–S135 are compositionally biased toward acidic residues. Over residues S136–K145 the composition is skewed to basic and acidic residues. 2 consecutive Ig-like C2-type domains span residues P158–D246 and P255–T357. Positions K160–K177 are heparin-binding. A disulfide bridge connects residues C178 and C230. N-linked (GlcNAc...) asparagine glycosylation is found at N227, N240, N264, N296, N317, and N330. C277 and C341 form a disulfide bridge. A helical transmembrane segment spans residues I377–Y397. Residues K398–R822 are Cytoplasmic-facing. Phosphotyrosine; by autocatalysis is present on Y463. One can recognise a Protein kinase domain in the interval L478–L767. Residues L484 to G490, K514, E562 to A564, and N568 contribute to the ATP site. Phosphotyrosine; by autocatalysis occurs at positions 583 and 585. D623 (proton acceptor) is an active-site residue. Residues R627 and D641 each coordinate ATP. Phosphotyrosine; by autocatalysis occurs at positions 653, 654, 730, and 766. The disordered stretch occupies residues S770 to R822. A compositionally biased stretch (polar residues) spans D776–E792.

Belongs to the protein kinase superfamily. Tyr protein kinase family. Fibroblast growth factor receptor subfamily. As to quaternary structure, monomer. Homodimer after ligand binding. Interacts predominantly with FGF1 and FGF2, but can also interact with FGF3, FGF4, FGF5, FGF6, FGF8, FGF10, FGF19, FGF21, FGF22 and FGF23 (in vitro). Ligand specificity is determined by tissue-specific expression of isoforms, and differences in the third Ig-like domain are crucial for ligand specificity. Affinity for fibroblast growth factors (FGFs) is increased by heparan sulfate glycosaminoglycans that function as coreceptors. Likewise, KLB increases the affinity for FGF19, FGF21 and FGF23. Interacts (phosphorylated on Tyr-766) with PLCG1 (via SH2 domains). Interacts with FRS2. Interacts (via C-terminus) with NEDD4 (via WW3 domain). Interacts with RPS6KA1. Interacts with KL. Interacts with SHB (via SH2 domain) and GRB10. Interacts with ANOS1; this interaction does not interfere with FGF2-binding to FGFR1, but prevents binding of heparin-bound FGF2. Interacts with SOX2 and SOX3. Interacts with FLRT1, FLRT2 and FLRT3. Found in a ternary complex with FGF1 and ITGAV:ITGB3. In terms of processing, autophosphorylated. Binding of FGF family members together with heparan sulfate proteoglycan or heparin promotes receptor dimerization and autophosphorylation on tyrosine residues. Autophosphorylation occurs in trans between the two FGFR molecules present in the dimer and proceeds in a highly ordered manner. Initial autophosphorylation at Tyr-653 increases the kinase activity by a factor of 50 to 100. After this, Tyr-583 becomes phosphorylated, followed by phosphorylation of Tyr-463, Tyr-766, Tyr-583 and Tyr-585. In a third stage, Tyr-654 is autophosphorylated, resulting in a further tenfold increase of kinase activity. Phosphotyrosine residues provide docking sites for interacting proteins and so are crucial for FGFR1 function and its regulation. Post-translationally, ubiquitinated. FGFR1 is rapidly ubiquitinated by NEDD4 after autophosphorylation, leading to internalization and lysosomal degradation. CBL is recruited to activated FGFR1 via FRS2 and GRB2, and mediates ubiquitination and subsequent degradation of FGFR1. N-glycosylated in the endoplasmic reticulum. The N-glycan chains undergo further maturation to an Endo H-resistant form in the Golgi apparatus. As to expression, expressed in the parathyroid.

It is found in the cell membrane. The protein resides in the nucleus. Its subcellular location is the cytoplasm. The protein localises to the cytosol. It localises to the cytoplasmic vesicle. The enzyme catalyses L-tyrosyl-[protein] + ATP = O-phospho-L-tyrosyl-[protein] + ADP + H(+). Present in an inactive conformation in the absence of bound ligand. Ligand binding leads to dimerization and activation by sequential autophosphorylation on tyrosine residues. Its function is as follows. Tyrosine-protein kinase that acts as a cell-surface receptor for fibroblast growth factors and plays an essential role in the regulation of embryonic development, cell proliferation, differentiation and migration. Required for normal mesoderm patterning and correct axial organization during embryonic development, normal skeletogenesis and normal development of the gonadotropin-releasing hormone (GnRH) neuronal system. Phosphorylates PLCG1, FRS2, GAB1 and SHB. Ligand binding leads to the activation of several signaling cascades. Activation of PLCG1 leads to the production of the cellular signaling molecules diacylglycerol and inositol 1,4,5-trisphosphate. Phosphorylation of FRS2 triggers recruitment of GRB2, GAB1, PIK3R1 and SOS1, and mediates activation of RAS, MAPK1/ERK2, MAPK3/ERK1 and the MAP kinase signaling pathway, as well as of the AKT1 signaling pathway. Promotes phosphorylation of SHC1, STAT1 and PTPN11/SHP2. In the nucleus, enhances RPS6KA1 and CREB1 activity and contributes to the regulation of transcription. FGFR1 signaling is down-regulated by IL17RD/SEF, and by FGFR1 ubiquitination, internalization and degradation. The sequence is that of Fibroblast growth factor receptor 1 (Fgfr1) from Rattus norvegicus (Rat).